Consider the following 359-residue polypeptide: DNA polymerase IV (359 aa).

One can recognise a UmuC domain in the interval 4-185 (IIHIDMDCYF…LSLRKIPGVG (182 aa)). Positions 8 and 103 each coordinate Mg(2+). Glutamate 104 is a catalytic residue.

The protein belongs to the DNA polymerase type-Y family. In terms of assembly, monomer. The cofactor is Mg(2+).

It localises to the cytoplasm. It catalyses the reaction DNA(n) + a 2'-deoxyribonucleoside 5'-triphosphate = DNA(n+1) + diphosphate. Functionally, poorly processive, error-prone DNA polymerase involved in untargeted mutagenesis. Copies undamaged DNA at stalled replication forks, which arise in vivo from mismatched or misaligned primer ends. These misaligned primers can be extended by PolIV. Exhibits no 3'-5' exonuclease (proofreading) activity. May be involved in translesional synthesis, in conjunction with the beta clamp from PolIII. The protein is DNA polymerase IV of Shewanella sp. (strain MR-4).